The chain runs to 386 residues: MQDYKLPAGLRDNFGPQATQKESVRHYLTGLFQRHHYTLIETSLLEYRDVFGPYELQAESLYRILEADGQDLVLRPDLTLPIARFLVTTNVSLPTSFAYVGEQFRRNRQLTGLYNQSTQAGIELVGFQSRRAELECLTVISELNRDLFNGRLLVELGQARLADLVLADLPANERQKEAIKAALFNKNVPDYEAAIAPFKRERHYPFLAEWTWLFGKADVVEKMVAPLWVNPAAREAMQEVLDLAKLVAQLGDQELLVDFSTAAPQAYYTGVTFKAYADQTSTYLVSGGRYDNLLANFQEKSEPAIGLGIDVTLIAQLLERSAPRDQAKPTLVFCQLADWPTFAKRYGGDPAYEACLADSLVAARTQAAATGQQLKVMNEEGDLIDA.

This sequence belongs to the class-II aminoacyl-tRNA synthetase family. HisZ subfamily. Heteromultimer composed of HisG and HisZ subunits.

The protein resides in the cytoplasm. Its pathway is amino-acid biosynthesis; L-histidine biosynthesis; L-histidine from 5-phospho-alpha-D-ribose 1-diphosphate: step 1/9. Required for the first step of histidine biosynthesis. May allow the feedback regulation of ATP phosphoribosyltransferase activity by histidine. This is ATP phosphoribosyltransferase regulatory subunit from Limosilactobacillus fermentum (strain NBRC 3956 / LMG 18251) (Lactobacillus fermentum).